The sequence spans 165 residues: Neuropeptide W (165 aa).

An N-terminal signal peptide occupies residues M1–A32. Residues A65–F165 constitute a propeptide that is removed on maturation. Positions S106–F165 are disordered. A compositionally biased stretch (low complexity) spans R113–P127. Residue S133 is glycosylated (O-linked (Xyl...) (chondroitin sulfate) serine).

Belongs to the neuropeptide B/W family. As to expression, detected in cerebrospinal fluid and urine (at protein level). Detected at high levels in the substantia nigra, fetal kidney and trachea; at lower levels in testis, uterus, ovary and placenta. Not detectable in many regions of the central nervous system. Also detected at high levels in lymphoblastic leukemia and colorectal adenocarcinoma.

Its subcellular location is the secreted. Plays a regulatory role in the organization of neuroendocrine signals accessing the anterior pituitary gland. Stimulates water drinking and food intake. May play a role in the hypothalamic response to stress. NPW23 activates GPR7 and GPR8 more efficiently than NPW30. The chain is Neuropeptide W (NPW) from Homo sapiens (Human).